A 55-amino-acid chain; its full sequence is Large ribosomal subunit protein bL32 (55 aa).

Residues 1 to 19 (MAVPKRRMSRANTHTRRSQ) show a composition bias toward basic residues. The interval 1–21 (MAVPKRRMSRANTHTRRSQWK) is disordered.

This sequence belongs to the bacterial ribosomal protein bL32 family.

The sequence is that of Large ribosomal subunit protein bL32 from Corynebacterium kroppenstedtii (strain DSM 44385 / JCM 11950 / CIP 105744 / CCUG 35717).